The chain runs to 261 residues: Indole-3-glycerol phosphate synthase (261 aa).

It belongs to the TrpC family.

The enzyme catalyses 1-(2-carboxyphenylamino)-1-deoxy-D-ribulose 5-phosphate + H(+) = (1S,2R)-1-C-(indol-3-yl)glycerol 3-phosphate + CO2 + H2O. Its pathway is amino-acid biosynthesis; L-tryptophan biosynthesis; L-tryptophan from chorismate: step 4/5. In Paraburkholderia phymatum (strain DSM 17167 / CIP 108236 / LMG 21445 / STM815) (Burkholderia phymatum), this protein is Indole-3-glycerol phosphate synthase.